Here is an 81-residue protein sequence, read N- to C-terminus: Small ribosomal subunit protein bS16 (81 aa).

This sequence belongs to the bacterial ribosomal protein bS16 family.

The sequence is that of Small ribosomal subunit protein bS16 from Lachnoclostridium phytofermentans (strain ATCC 700394 / DSM 18823 / ISDg) (Clostridium phytofermentans).